The following is a 787-amino-acid chain: Vacuolar protein sorting-associated protein 35A (787 aa).

Met1 bears the N-acetylmethionine mark.

This sequence belongs to the VPS35 family. Component of the retromer complex which consists of VPS29 (MAG1), VPS26 (VPS26A or VPS26B), VPS35 (VPS35A or VPS35B or VPS35C), VPS5/17 (SNX1 or SNX2A or SNX2B). Component of a retromer subcomplex consisting of VPS29 (MAG1), VPS26 (VPS26A or VPS26B), VPS35 (VPS35A or VPS35B or VPS35C). Interacts with RABG3F.

The protein resides in the cytoplasm. It localises to the endosome membrane. Its subcellular location is the prevacuolar compartment membrane. The protein localises to the golgi apparatus. It is found in the trans-Golgi network membrane. In terms of biological role, plays a role in vesicular protein sorting. Component of the membrane-associated retromer complex which is essential in endosome-to-Golgi retrograde transport. Also involved in the efficient sorting of seed storage proteins. Binds alone to endosomal membranes and is required for recruitment of VPS26 and VPS29 to membrane. The VPS29-VPS26-VPS35 subcomplex may be involved in recycling of specific cargos from endosome to the plasma membrane. The polypeptide is Vacuolar protein sorting-associated protein 35A (VPS35A) (Arabidopsis thaliana (Mouse-ear cress)).